Consider the following 363-residue polypeptide: Ribosomal RNA large subunit methyltransferase M (363 aa).

Residues serine 194, 227-230 (CPGG), aspartate 246, aspartate 266, and aspartate 284 contribute to the S-adenosyl-L-methionine site. The Proton acceptor role is filled by lysine 313.

The protein belongs to the class I-like SAM-binding methyltransferase superfamily. RNA methyltransferase RlmE family. RlmM subfamily. As to quaternary structure, monomer.

It localises to the cytoplasm. It carries out the reaction cytidine(2498) in 23S rRNA + S-adenosyl-L-methionine = 2'-O-methylcytidine(2498) in 23S rRNA + S-adenosyl-L-homocysteine + H(+). Catalyzes the 2'-O-methylation at nucleotide C2498 in 23S rRNA. This Haemophilus influenzae (strain ATCC 51907 / DSM 11121 / KW20 / Rd) protein is Ribosomal RNA large subunit methyltransferase M.